A 156-amino-acid chain; its full sequence is ATP synthase subunit b (156 aa).

Residues 7 to 27 form a helical membrane-spanning segment; it reads LFVQAIVFLILVLFTMKFVWP.

This sequence belongs to the ATPase B chain family. In terms of assembly, F-type ATPases have 2 components, F(1) - the catalytic core - and F(0) - the membrane proton channel. F(1) has five subunits: alpha(3), beta(3), gamma(1), delta(1), epsilon(1). F(0) has three main subunits: a(1), b(2) and c(10-14). The alpha and beta chains form an alternating ring which encloses part of the gamma chain. F(1) is attached to F(0) by a central stalk formed by the gamma and epsilon chains, while a peripheral stalk is formed by the delta and b chains.

Its subcellular location is the cell inner membrane. Its function is as follows. F(1)F(0) ATP synthase produces ATP from ADP in the presence of a proton or sodium gradient. F-type ATPases consist of two structural domains, F(1) containing the extramembraneous catalytic core and F(0) containing the membrane proton channel, linked together by a central stalk and a peripheral stalk. During catalysis, ATP synthesis in the catalytic domain of F(1) is coupled via a rotary mechanism of the central stalk subunits to proton translocation. In terms of biological role, component of the F(0) channel, it forms part of the peripheral stalk, linking F(1) to F(0). This is ATP synthase subunit b from Delftia acidovorans (strain DSM 14801 / SPH-1).